A 314-amino-acid chain; its full sequence is 4-hydroxy-3-methylbut-2-enyl diphosphate reductase (314 aa).

A [4Fe-4S] cluster-binding site is contributed by cysteine 12. Residues histidine 41 and histidine 74 each coordinate (2E)-4-hydroxy-3-methylbut-2-enyl diphosphate. 2 residues coordinate dimethylallyl diphosphate: histidine 41 and histidine 74. Isopentenyl diphosphate-binding residues include histidine 41 and histidine 74. Residue cysteine 96 coordinates [4Fe-4S] cluster. Residue histidine 124 coordinates (2E)-4-hydroxy-3-methylbut-2-enyl diphosphate. Histidine 124 serves as a coordination point for dimethylallyl diphosphate. Histidine 124 is an isopentenyl diphosphate binding site. Residue glutamate 126 is the Proton donor of the active site. Threonine 167 is a binding site for (2E)-4-hydroxy-3-methylbut-2-enyl diphosphate. Cysteine 197 lines the [4Fe-4S] cluster pocket. Serine 225, serine 226, asparagine 227, and serine 269 together coordinate (2E)-4-hydroxy-3-methylbut-2-enyl diphosphate. The dimethylallyl diphosphate site is built by serine 225, serine 226, asparagine 227, and serine 269. Isopentenyl diphosphate-binding residues include serine 225, serine 226, asparagine 227, and serine 269.

Belongs to the IspH family. [4Fe-4S] cluster serves as cofactor.

The enzyme catalyses isopentenyl diphosphate + 2 oxidized [2Fe-2S]-[ferredoxin] + H2O = (2E)-4-hydroxy-3-methylbut-2-enyl diphosphate + 2 reduced [2Fe-2S]-[ferredoxin] + 2 H(+). The catalysed reaction is dimethylallyl diphosphate + 2 oxidized [2Fe-2S]-[ferredoxin] + H2O = (2E)-4-hydroxy-3-methylbut-2-enyl diphosphate + 2 reduced [2Fe-2S]-[ferredoxin] + 2 H(+). It participates in isoprenoid biosynthesis; dimethylallyl diphosphate biosynthesis; dimethylallyl diphosphate from (2E)-4-hydroxy-3-methylbutenyl diphosphate: step 1/1. It functions in the pathway isoprenoid biosynthesis; isopentenyl diphosphate biosynthesis via DXP pathway; isopentenyl diphosphate from 1-deoxy-D-xylulose 5-phosphate: step 6/6. In terms of biological role, catalyzes the conversion of 1-hydroxy-2-methyl-2-(E)-butenyl 4-diphosphate (HMBPP) into a mixture of isopentenyl diphosphate (IPP) and dimethylallyl diphosphate (DMAPP). Acts in the terminal step of the DOXP/MEP pathway for isoprenoid precursor biosynthesis. The chain is 4-hydroxy-3-methylbut-2-enyl diphosphate reductase from Aliivibrio fischeri (strain ATCC 700601 / ES114) (Vibrio fischeri).